The chain runs to 255 residues: Complement C1q-like protein 3 (255 aa).

The first 20 residues, 1 to 20 (MVLLLVILIPVLVSSAGTSA), serve as a signal peptide directing secretion. The interval 39 to 109 (KAPSTAATPD…GLPGPPGAPG (71 aa)) is disordered. The 51-residue stretch at 61 to 111 (GPKGEAGRPGKAGPRGPPGEPGPPGPVGPPGEKGEPGRQGLPGPPGAPGLN) folds into the Collagen-like domain. The segment covering 75-89 (RGPPGEPGPPGPVGP) has biased composition (pro residues). A C1q domain is found at 122–255 (STVPKIAFYA…TFSGFIIYAD (134 aa)).

In terms of assembly, forms homooligomers. Interacts with ADGRB3. Forms heterooligomers with C1QL2 and C1QL4, when proteins are coexpressed; this interaction does not occur after secretion. As to expression, highly expressed in brain and white adipose tissue. In gonadal fat pad, expressed at lower levels in adipocytes than in the stromal vascular fraction (VSP), which contains preadipocytes, fibroblasts, endothelial cells and occasional immune cells. Expression exhibits sexually dimorphism, with higher levels in females than in males (at protein level). Tends to be up-regulated in adipose tissue from obese males, but not females. Expressed in glial cells.

Its subcellular location is the secreted. In terms of biological role, may regulate the number of excitatory synapses that are formed on hippocampus neurons. Has no effect on inhibitory synapses. Plays a role in glucose homeostasis. Via AMPK signaling pathway, stimulates glucose uptake in adipocytes, myotubes and hepatocytes and enhances insulin-stimulated glucose uptake. In a hepatoma cell line, reduces the expression of gluconeogenic enzymes G6PC1 and PCK1 and hence decreases de novo glucose production. The chain is Complement C1q-like protein 3 (C1ql3) from Mus musculus (Mouse).